Here is a 1939-residue protein sequence, read N- to C-terminus: Myosin-1 (1939 aa).

Positions 33 to 82 (DAKTSVFVVDPKESFVKATVQSREGGKVTAKTEAGATVTVKDDQVFPMNP) constitute a Myosin N-terminal SH3-like domain. Phosphothreonine occurs at positions 64 and 69. The Myosin motor domain maps to 86-782 (DKIEDMAMMT…LLGLLEEMRD (697 aa)). N6,N6,N6-trimethyllysine is present on lysine 130. 179 to 186 (GESGAGKT) contacts ATP. A Phosphotyrosine modification is found at tyrosine 389. At threonine 419 the chain carries Phosphothreonine. Tyrosine 424 is modified (phosphotyrosine). The segment at 659–681 (LNKLMTNLRSTHPHFVRCIIPNE) is actin-binding. Histidine 757 carries the post-translational modification Pros-methylhistidine. The tract at residues 761–775 (KFGHTKVFFKAGLLG) is actin-binding. Positions 785–814 (LAQLITRTQAMCRGFLARVEYQKMVERRES) constitute an IQ domain. Residues 843-1939 (LLKSAETEKE…EVHTKIISEE (1097 aa)) adopt a coiled-coil conformation. Phosphoserine is present on residues serine 1092, serine 1096, serine 1162, and serine 1237. Threonine 1241 carries the post-translational modification Phosphothreonine. 2 positions are modified to phosphoserine: serine 1243 and serine 1261. A phosphothreonine mark is found at threonine 1265 and threonine 1286. Serine 1288, serine 1292, serine 1303, and serine 1306 each carry phosphoserine. Residue threonine 1467 is modified to Phosphothreonine. Serine 1474 bears the Phosphoserine mark. A Phosphotyrosine modification is found at tyrosine 1492. Phosphoserine is present on serine 1495. Phosphothreonine is present on threonine 1501. The residue at position 1514 (serine 1514) is a Phosphoserine. The residue at position 1517 (threonine 1517) is a Phosphothreonine. 7 positions are modified to phosphoserine: serine 1542, serine 1554, serine 1574, serine 1600, serine 1603, serine 1714, and serine 1726. Residues threonine 1730 and threonine 1736 each carry the phosphothreonine modification. Serine 1739 carries the phosphoserine modification.

Belongs to the TRAFAC class myosin-kinesin ATPase superfamily. Myosin family. Muscle myosin is a hexameric protein that consists of 2 heavy chain subunits (MHC), 2 alkali light chain subunits (MLC) and 2 regulatory light chain subunits (MLC-2). Interacts with SLC26A5.

It is found in the cytoplasm. Its subcellular location is the myofibril. Functionally, required for normal hearing. It plays a role in cochlear amplification of auditory stimuli, likely through the positive regulation of prestin (SLC26A5) activity and outer hair cell (OHC) electromotility. This is Myosin-1 from Homo sapiens (Human).